The following is an 822-amino-acid chain: Coiled-coil domain-containing protein 175 (822 aa).

Coiled-coil stretches lie at residues Ile-129 to Gly-164, Ile-223 to Met-397, and His-510 to Leu-537.

This chain is Coiled-coil domain-containing protein 175 (Ccdc175), found in Mus musculus (Mouse).